Reading from the N-terminus, the 371-residue chain is MASVQLQNVTKAWGEVVVSKDINLDIHEGEFVVFVGPSGCGKSTLLRMIAGLETITSGDLFIGEKRMNDTPPAERGVGMVFQSYALYPHLSVAENMSFGLKLAGAKKEVINQQVNQVAEVLQLAHLLDRKPKALSGGQRQRVAIGRTLVAEPSVFLLDEPLSNLDAALRVQMRIEISRLHKRLGRTMIYVTHDQVEAMTLADKIVVLDAGRVAQVGKPLELYHYPADRFVAGFIGSPKMNFLPVKVTATAIDQVQVELPMPNRQQVWLPVESRDVQVGANMSLGIRPEHLLPSDIADVILEGEVQVVEQLGNETQIHIQIPSIRQNLVYRQNDVVLVEEGATFAIGLPPERCHLFREDGTACRRLHKEPGV.

The ABC transporter domain occupies 4–234 (VQLQNVTKAW…PADRFVAGFI (231 aa)). 36–43 (GPSGCGKS) serves as a coordination point for ATP.

It belongs to the ABC transporter superfamily. Maltooligosaccharide importer (TC 3.A.1.1.1) family. In terms of assembly, the complex is composed of two ATP-binding proteins (MalK), two transmembrane proteins (MalG and MalK) and a solute-binding protein (MalE).

It localises to the cell inner membrane. It catalyses the reaction D-maltose(out) + ATP + H2O = D-maltose(in) + ADP + phosphate + H(+). Its function is as follows. Part of the ABC transporter complex MalEFGK involved in maltose/maltodextrin import. Responsible for energy coupling to the transport system. This chain is Maltose/maltodextrin import ATP-binding protein MalK, found in Escherichia coli O6:K15:H31 (strain 536 / UPEC).